We begin with the raw amino-acid sequence, 294 residues long: Urease accessory protein UreD 1 (294 aa).

The segment at 1–22 (MALSLDGLPEKPAPAEAPSPPV) is disordered. Positions 11–21 (KPAPAEAPSPP) are enriched in pro residues.

This sequence belongs to the UreD family. As to quaternary structure, ureD, UreF and UreG form a complex that acts as a GTP-hydrolysis-dependent molecular chaperone, activating the urease apoprotein by helping to assemble the nickel containing metallocenter of UreC. The UreE protein probably delivers the nickel.

The protein localises to the cytoplasm. Required for maturation of urease via the functional incorporation of the urease nickel metallocenter. The sequence is that of Urease accessory protein UreD 1 from Methylorubrum extorquens (strain PA1) (Methylobacterium extorquens).